The following is a 65-amino-acid chain: Large ribosomal subunit protein bL33 (65 aa).

Positions 20 to 40 (VPPSEKRSPGVSRYTTEKNRR) are disordered.

It belongs to the bacterial ribosomal protein bL33 family.

The protein is Large ribosomal subunit protein bL33 of Prochlorococcus marinus (strain MIT 9211).